We begin with the raw amino-acid sequence, 94 residues long: Ferredoxin-like protein (94 aa).

4Fe-4S ferredoxin-type domains are found at residues 20-52 and 53-83; these read PHIR…RETN and GKVT…WEWP.

To ferredoxins from P.putida and C.tartarivorum, ferredoxin I from A.vinelandii, ferredoxin II from D.desulfuricans.

Functionally, could be a 3Fe-4S cluster-containing protein. This Azotobacter vinelandii protein is Ferredoxin-like protein (fixX).